The following is a 345-amino-acid chain: Ubiquitin-associated domain-containing protein 2 (345 aa).

The signal sequence occupies residues 1-35; sequence MFTSTGSSGLYKAPLSKSLLLVPSALSLLLALLLP. The Extracellular segment spans residues 36–91; sequence HCQKLFVYDLHAVKNDFQIWRLICGRIICLDLKDTFCSSLLIYNFRIFERRYGSRK. Residues 92–112 traverse the membrane as a helical segment; it reads FASFLLGSWVLSALFDFLLVE. Residues 113 to 125 lie on the Cytoplasmic side of the membrane; sequence AMQYFFGITAASN. Residues 126 to 146 traverse the membrane as a helical segment; that stretch reads LPSGFLAPVFALFVPFYCSIP. Residues 147–163 are Extracellular-facing; the sequence is RVQVAQILGPLSITNKT. Residue Asn161 is glycosylated (N-linked (GlcNAc...) asparagine). The helical transmembrane segment at 164-184 threads the bilayer; that stretch reads LIYILGLQLFTSGSYIWIVAI. Over 185–345 the chain is Cytoplasmic; that stretch reads SGLMSGLCYN…NVATNFLLQH (161 aa). One can recognise a UBA domain in the interval 305 to 345; sequence EVSEEQVARLMEMGFSRGDALEALRASNNDLNVATNFLLQH.

In terms of assembly, interacts with LMBR1L, FAF2, AMFR and VCP.

Its subcellular location is the endoplasmic reticulum membrane. Its function is as follows. Restricts trafficking of FAF2 from the endoplasmic reticulum to lipid droplets. In association with LMBR1L and E3 ubiquitin-protein ligase AMFR, negatively regulates the canonical Wnt signaling pathway in the lymphocytes by promoting the ubiquitin-mediated degradation of CTNNB1 and Wnt receptors FZD6 and LRP6. The protein is Ubiquitin-associated domain-containing protein 2 (UBAC2) of Macaca fascicularis (Crab-eating macaque).